Here is a 304-residue protein sequence, read N- to C-terminus: Methionyl-tRNA formyltransferase (304 aa).

107–110 (SLLP) lines the (6S)-5,6,7,8-tetrahydrofolate pocket.

This sequence belongs to the Fmt family.

The catalysed reaction is L-methionyl-tRNA(fMet) + (6R)-10-formyltetrahydrofolate = N-formyl-L-methionyl-tRNA(fMet) + (6S)-5,6,7,8-tetrahydrofolate + H(+). Functionally, attaches a formyl group to the free amino group of methionyl-tRNA(fMet). The formyl group appears to play a dual role in the initiator identity of N-formylmethionyl-tRNA by promoting its recognition by IF2 and preventing the misappropriation of this tRNA by the elongation apparatus. The sequence is that of Methionyl-tRNA formyltransferase from Coprothermobacter proteolyticus (strain ATCC 35245 / DSM 5265 / OCM 4 / BT).